An 804-amino-acid chain; its full sequence is Endoplasmin (804 aa).

The first 21 residues, methionine 1–alanine 21, serve as a signal peptide directing secretion. An SRT pseudosubstrate motif motif is present at residues serine 42 to threonine 44. Asparagine 62 carries N-linked (GlcNAc...) asparagine glycosylation. Serine 64 is modified (phosphoserine). N-linked (GlcNAc...) asparagine glycosylation is present at asparagine 107. Asparagine 107, aspartate 149, and asparagine 162 together coordinate ATP. Lysine 168 is subject to N6-(2-hydroxyisobutyryl)lysine. Position 172 is a phosphoserine (serine 172). Phenylalanine 199 lines the ATP pocket. Residue asparagine 217 is glycosylated (N-linked (GlcNAc...) asparagine). The disordered stretch occupies residues threonine 288–threonine 323. Acidic residues predominate over residues valine 289 to glutamate 317. Phosphoserine is present on residues serine 306 and serine 403. Lysine 404 bears the N6-succinyllysine mark. Residue asparagine 445 is glycosylated (N-linked (GlcNAc...) asparagine). Serine 447 carries the phosphoserine modification. Lysine 479 bears the N6-acetyllysine mark. Asparagine 481 and asparagine 502 each carry an N-linked (GlcNAc...) asparagine glycan. At lysine 633 the chain carries N6-succinyllysine. A disordered region spans residues aspartate 750–leucine 804. Acidic residues predominate over residues glutamate 757–glutamine 791. Threonine 786 is subject to Phosphothreonine. Residues glutamate 792–leucine 804 show a composition bias toward basic and acidic residues. Residues lysine 801–leucine 804 carry the Prevents secretion from ER motif.

Belongs to the heat shock protein 90 family. As to quaternary structure, homodimer; disulfide-linked. Component of an EIF2 complex at least composed of CELF1/CUGBP1, CALR, CALR3, EIF2S1, EIF2S2, HSP90B1 and HSPA5. Part of a large chaperone multiprotein complex comprising DNAJB11, HSP90B1, HSPA5, HYOU, PDIA2, PDIA4, PDIA6, PPIB, SDF2L1, UGGT1 and very small amounts of ERP29, but not, or at very low levels, CALR nor CANX. Interacts with AIMP1; regulates its retention in the endoplasmic reticulum. Hyperglycosylated form interacts with OS9; promoting its degradation by the endoplasmic reticulum associated degradation (ERAD). Interacts with CNPY3. This interaction is disrupted in the presence of ATP. Interacts with TLR4 and TLR9, but not with TLR3. Interacts with MZB1 in a calcium-dependent manner. Interacts with METTL23. Interacts with IL1B; the interaction facilitates cargo translocation into the ERGIC. Interacts with EIF2AK3. In terms of processing, phosphorylated by CK2. N-glycosylated cotranslationally at Asn-217 by STT3A-containing OST-A complex: this glycosylation is constitutive. In response to various stress, 5 additional facultative sites (Asn-62, Asn-107, Asn-445, Asn-481 and Asn-502) can be glycosylated post-translationally by STT3B-containing OST-B complex, leading to a hyperglycosylated form that is degraded by the ER-associated degradation (ERAD) pathway. In normal conditions, the OST-A complex together with CCDC134 prevent glycosylation at facultative sites during protein folding, thereby preventing hyperglycosylation. Mechanistically, nascent HSP90B1 is tethered during translation to a specialized CCDC134-containing translocon that forms a microenvironment for its folding, in which STT3A associates with the SRT pseudosubstrate motif, and prevents access to facultative glycosylation sites until folding is completed, rendering its facultative sites inaccessible to the OST-B complex.

It is found in the endoplasmic reticulum lumen. The protein localises to the sarcoplasmic reticulum lumen. Its subcellular location is the melanosome. The catalysed reaction is ATP + H2O = ADP + phosphate + H(+). ATP-dependent chaperone involved in the processing of proteins in the endoplasmic reticulum, regulating their transport. Together with MESD, acts as a modulator of the Wnt pathway by promoting the folding of LRP6, a coreceptor of the canonical Wnt pathway. When associated with CNPY3, required for proper folding of Toll-like receptors. Promotes folding and trafficking of TLR4 to the cell surface. May participate in the unfolding of cytosolic leaderless cargos (lacking the secretion signal sequence) such as the interleukin 1/IL-1 to facilitate their translocation into the ERGIC (endoplasmic reticulum-Golgi intermediate compartment) and secretion; the translocation process is mediated by the cargo receptor TMED10. The protein is Endoplasmin (HSP90B1) of Pongo abelii (Sumatran orangutan).